Here is an 805-residue protein sequence, read N- to C-terminus: Probable phosphoketolase (805 aa).

It belongs to the XFP family. The cofactor is thiamine diphosphate.

The polypeptide is Probable phosphoketolase (Synechocystis sp. (strain ATCC 27184 / PCC 6803 / Kazusa)).